The following is a 179-amino-acid chain: MSRLQDFYKSKVAVDLQAKFGYKSVMEVPRITKITLNMGVSEAVADKKVIEHAVSDLTKIAGQKPVITKTRKAIAGFKIRENYPIGCMVTLRGQRMYEFLDRLVAIALPRVRDFRGISGRAFDGRGNYNIGVKEQIIFPEIEYDKIDALRGLNISITTSAKTDEEAKALLTAFSFPFRN.

Belongs to the universal ribosomal protein uL5 family. As to quaternary structure, part of the 50S ribosomal subunit; part of the 5S rRNA/L5/L18/L25 subcomplex. Contacts the 5S rRNA and the P site tRNA. Forms a bridge to the 30S subunit in the 70S ribosome.

This is one of the proteins that bind and probably mediate the attachment of the 5S RNA into the large ribosomal subunit, where it forms part of the central protuberance. In the 70S ribosome it contacts protein S13 of the 30S subunit (bridge B1b), connecting the 2 subunits; this bridge is implicated in subunit movement. Contacts the P site tRNA; the 5S rRNA and some of its associated proteins might help stabilize positioning of ribosome-bound tRNAs. The chain is Large ribosomal subunit protein uL5 from Bordetella avium (strain 197N).